Here is a 335-residue protein sequence, read N- to C-terminus: Probable geranylgeranyl transferase type-2 subunit beta (335 aa).

PFTB repeat units lie at residues 74–115, 122–163, 170–211, 218–259, and 266–312; these read TEEI…IIFN, ADTI…HLLG, IDSA…AIAG, RDRT…AILG, and SDAM…DDTL. Geranylgeranyl diphosphate-binding positions include 196 to 198 and 238 to 250; these read HSG and RPEKLPDVCYSWW. Zn(2+)-binding residues include aspartate 244, cysteine 246, and histidine 296.

This sequence belongs to the protein prenyltransferase subunit beta family. Heterodimer of an alpha and a beta subunit. The cofactor is Zn(2+).

The enzyme catalyses geranylgeranyl diphosphate + L-cysteinyl-[protein] = S-geranylgeranyl-L-cysteinyl-[protein] + diphosphate. Functionally, catalyzes the transfer of a geranyl-geranyl moiety from geranyl-geranyl pyrophosphate to both cysteines in Rab proteins with an -XXCC, -XCXC and -CCXX C-terminal. The protein is Probable geranylgeranyl transferase type-2 subunit beta (ggtb-1) of Caenorhabditis elegans.